Consider the following 394-residue polypeptide: Guanine nucleotide-binding protein G(s) subunit alpha (394 aa).

A disordered region spans residues 1-23 (MGCLGNSKTEDQRNEEKAQREAN). The N-palmitoyl glycine moiety is linked to residue G2. C3 is lipidated: S-palmitoyl cysteine. The segment covering 8–23 (KTEDQRNEEKAQREAN) has biased composition (basic and acidic residues). The G-alpha domain maps to 39–394 (ATHRLLLLGA…RMHLRQYELL (356 aa)). A G1 motif region spans residues 42–55 (RLLLLGAGESGKST). 47–55 (GAGESGKST) contacts GTP. S54 contacts Mg(2+). Positions 68–90 (FNGEGGEEDPQAARSNSDGEKAT) are disordered. The interval 196–204 (DLLRCRVLT) is G2 motif. GTP-binding positions include 197-204 (LLRCRVLT), 223-227 (DVGGQ), 292-295 (NKQD), and A366. Position 204 (T204) interacts with Mg(2+). The G3 motif stretch occupies residues 219–228 (FHMFDVGGQR). The tract at residues 288–295 (ILFLNKQD) is G4 motif. A G5 motif region spans residues 364–369 (TCAVDT).

This sequence belongs to the G-alpha family. G(s) subfamily. In terms of assembly, heterotrimeric G proteins are composed of 3 units; alpha, beta and gamma. The alpha chain contains the guanine nucleotide binding site. Interacts with CRY1; the interaction may block GPCR-mediated regulation of cAMP concentrations. Interacts with ADCY6 and stimulates its adenylyl cyclase activity. Interacts with ADCY2 and ADCY5. Stimulates the ADCY5 adenylyl cyclase activity. Interaction with SASH1.

It is found in the cell membrane. In terms of biological role, guanine nucleotide-binding proteins (G proteins) function as transducers in numerous signaling pathways controlled by G protein-coupled receptors (GPCRs). Signaling involves the activation of adenylyl cyclases, resulting in increased levels of the signaling molecule cAMP. GNAS functions downstream of several GPCRs, including beta-adrenergic receptors. Stimulates the Ras signaling pathway via RAPGEF2. In Cricetulus griseus (Chinese hamster), this protein is Guanine nucleotide-binding protein G(s) subunit alpha (GNAS).